The following is a 337-amino-acid chain: Oxidoreductase andH (337 aa).

The protein belongs to the NmrA-type oxidoreductase family.

The protein operates within secondary metabolite biosynthesis; terpenoid biosynthesis. Functionally, oxidoreductase; part of the gene cluster that mediates the biosynthesis of anditomin, a fungal meroterpenoid. The first step of the pathway is the synthesis of 3,5-dimethylorsellinic acid (DMOA) by the polyketide synthase andM. DMOA is then converted to the phthalide compound 5,7-dihydroxy-4,6-dimethylphthalide (DHDMP) by the cytochrome P450 monooxygenase andK, which is further prenylated by the prenyltransferase andD to yield farnesyl-DHDMP. Further epoxidation by the FAD-dependent monooxygenase andE leads to epoxyfarnesyl-DHDMP. The next step involves the terpene cyclase andB that converts epoxyfarnesyl-DHDMP into preandiloid A through opening of the epoxide ring followed by the cyclization of the farnesyl moiety. Preandiloid A is in turn oxidized at the C-3 hydroxyl group to yield preandiloid B by the dehydrogenase andC. The dioxygenase andA is solely responsible for the dehydrogenation of preandiloid B leading to the enone preandiloid C, as well as for the intriguing structural rearrangement to generate the bicyclo[2.2.2]octane core, transforming preandiloid C into andiconin. FAD-binding monooxygenase andJ then produces andilesin D which is reduced by dehydrogenase andI to yield andilesin A. Action of acetyltransferase andG followed by a spontaneous acetate elimination leads then to andilesin B, which is in turn substrate of the short chain dehydrogenase andH to yield andilesin C. Finally, the dioxygenase andF catalyzes the transformation of andilesin C to anditomin. This is Oxidoreductase andH from Emericella variicolor (Aspergillus stellatus).